A 1367-amino-acid polypeptide reads, in one-letter code: DNA-directed RNA polymerase subunit beta' (1367 aa).

Positions 1-34 are disordered; that stretch reads MTSTSPKSRKSSSKRKGSKKKAARSKNVIPPLSK. Basic residues predominate over residues 7–24; it reads KSRKSSSKRKGSKKKAAR. C250, C317, C324, and C327 together coordinate Zn(2+). The disordered stretch occupies residues 1306-1367; that stretch reads SVLDDPSDAD…LQEEGLLSDE (62 aa). The span at 1355–1367 shows a compositional bias: low complexity; that stretch reads LEGLQEEGLLSDE.

The protein belongs to the RNA polymerase beta' chain family. RpoC2 subfamily. As to quaternary structure, in cyanobacteria the RNAP catalytic core is composed of 2 alpha, 1 beta, 1 beta', 1 gamma and 1 omega subunit. When a sigma factor is associated with the core the holoenzyme is formed, which can initiate transcription. Zn(2+) serves as cofactor.

It catalyses the reaction RNA(n) + a ribonucleoside 5'-triphosphate = RNA(n+1) + diphosphate. Its function is as follows. DNA-dependent RNA polymerase catalyzes the transcription of DNA into RNA using the four ribonucleoside triphosphates as substrates. The sequence is that of DNA-directed RNA polymerase subunit beta' from Prochlorococcus marinus (strain SARG / CCMP1375 / SS120).